The primary structure comprises 317 residues: RHOMBOID-like protein 2 (317 aa).

A run of 7 helical transmembrane segments spans residues 33–53 (SWLI…VMFV), 118–138 (WLHA…FIGI), 149–169 (VGLI…LFLQ), 172–192 (ISVG…SELL), 202–222 (AAAL…GMLP), 224–244 (VDNF…FVLL), and 272–292 (LFVV…VMLF). Residue Ser177 is the Nucleophile of the active site. The active-site Charge relay system is the His229.

It belongs to the peptidase S54 family. As to expression, expressed in roots, seedlings, leaves, stems and flowers.

Its subcellular location is the golgi apparatus membrane. The catalysed reaction is Cleaves type-1 transmembrane domains using a catalytic dyad composed of serine and histidine that are contributed by different transmembrane domains.. In terms of biological role, rhomboid-type serine protease that catalyzes intramembrane proteolysis. Can cleave the Drosophila proteins Spitz and Keren. May function in pollen elongation. The protein is RHOMBOID-like protein 2 of Arabidopsis thaliana (Mouse-ear cress).